We begin with the raw amino-acid sequence, 1000 residues long: SEC23-interacting protein (1000 aa).

The interval methionine 1 to glutamate 367 is interaction with SEC23A. Residues phenylalanine 133 to proline 252 are disordered. A compositionally biased stretch (low complexity) spans serine 154–tyrosine 167. Residues proline 207 to proline 218 show a composition bias toward pro residues. The segment covering serine 235–proline 246 has biased composition (low complexity). Residues lysine 644 to leucine 707 enclose the SAM domain. Residues alanine 716–lysine 748 are disordered. 2 positions are modified to phosphoserine: serine 737 and serine 926. Positions leucine 779–arginine 989 constitute a DDHD domain.

This sequence belongs to the PA-PLA1 family. Interacts with SEC23A. Ubiquitously expressed with stronger levels detected in heart, liver and skeletal muscle.

The protein resides in the cytoplasmic vesicle. The protein localises to the COPII-coated vesicle membrane. It localises to the endoplasmic reticulum. Its function is as follows. Plays a role in the organization of endoplasmic reticulum exit sites. Specifically binds to phosphatidylinositol 3-phosphate (PI(3)P), phosphatidylinositol 4-phosphate (PI(4)P) and phosphatidylinositol 5-phosphate (PI(5)P). The polypeptide is SEC23-interacting protein (SEC23IP) (Homo sapiens (Human)).